The chain runs to 142 residues: uncharacterized protein (142 aa).

It belongs to the GlcG family.

This is an uncharacterized protein from Citrobacter freundii.